Here is a 268-residue protein sequence, read N- to C-terminus: Tetratricopeptide repeat protein 33 (268 aa).

A disordered region spans residues 14–34 (VSKQTVQQFEQDSEQADEDEV). Positions 24–34 (QDSEQADEDEV) are enriched in acidic residues. TPR repeat units lie at residues 60-93 (SKRLKEEGALLAEQDRNWEALKKWDEAVQLTPED), 94-127 (AVLYEMKSQVLITLGEVFLAVQSAEMATRLRPIW), and 128-161 (WEAWQTLGRAQLSLGEVELAVRSFQVALHLHPSE). Residues 249-268 (EGDDNPTSSSQSVLIKARGL) form a disordered region.

The chain is Tetratricopeptide repeat protein 33 (ttc33) from Danio rerio (Zebrafish).